We begin with the raw amino-acid sequence, 619 residues long: MANDIDELIGIPFPNHSSEVLCSLNEQRHDGLLCDVLLVVQEQEYRTHRSVLAACSKYFKKLFTAGTLASQPYVYEIDFVQPEALAAILEFAYTSTLTITAGNVKHILNAARMLEIQCIVNVCLEIMEPGGDGGEEDDKEDDDDDEDDDDEEDEEEEEEEEEDDDDDTEDFADQENLPDPQDISCHQSPSKTDHLTEKAYSDTPRDFPDSFQAGSPGHLGVIRDFSIESLLRENLYPKANIPDRRPSLSPFAPDFFPHLWPGDFGAFAQLPEQPMDSGPLDLVIKNRKIKEEEKEELPPPPPPPFPNDFFKDMFPDLPGGPLGPIKAENDYGAYLNFLSATHLGGLFPPWPLVEERKLKPKASQQCPICHKVIMGAGKLPRHMRTHTGEKPYMCTICEVRFTRQDKLKIHMRKHTGERPYLCIHCNAKFVHNYDLKNHMRIHTGVRPYQCEFCYKSFTRSDHLHRHIKRQSCRMARPRRGRKPAAWRAASLLFGPGGPAPDKAAFVMPPALGEVGGHLGGAAVCLPGPSPAKHFLAAPKGALSLQELERQFEETQMKLFGRAQLEAERNAGGLLAFALAENVAAARPYFPLPDPWAAGLAGLPGLAGLNHVASMSEANN.

Residues 34–101 form the BTB domain; sequence CDVLLVVQEQ…AYTSTLTITA (68 aa). The tract at residues 129-218 is disordered; that stretch reads PGGDGGEEDD…DSFQAGSPGH (90 aa). The segment covering 133–173 has biased composition (acidic residues); that stretch reads GGEEDDKEDDDDDEDDDDEEDEEEEEEEEEDDDDDTEDFAD. A compositionally biased stretch (basic and acidic residues) spans 191 to 208; that stretch reads KTDHLTEKAYSDTPRDFP. C2H2-type zinc fingers lie at residues 364–386, 392–414, and 420–442; these read QQCPICHKVIMGAGKLPRHMRTH, YMCTICEVRFTRQDKLKIHMRKH, and YLCIHCNAKFVHNYDLKNHMRIH. The segment at 448–478 adopts a C2H2-type 4; degenerate zinc-finger fold; it reads YQCEFCYKSFTRSDHLHRHIKRQSCRMARPR.

In terms of tissue distribution, detected in normal cervical keratinocytes, and in some cervical carcinoma cell lines.

Its function is as follows. May be a tumor suppressor gene. The protein is Zinc finger and BTB domain-containing protein 7C (ZBTB7C) of Homo sapiens (Human).